Consider the following 373-residue polypeptide: Dof zinc finger protein 3 (373 aa).

Residues 1–23 (MASGGALSPVEEKPTVVKTTKAE) are disordered. Over residues 10-23 (VEEKPTVVKTTKAE) the composition is skewed to basic and acidic residues. The segment at 45 to 99 (PCCPRCNSIKTKFCYYNNYSMAQPRYFCRECRRYWTQGGSLRNVPVGGGCRKSKR) adopts a Dof-type zinc-finger fold. 4 residues coordinate Zn(2+): cysteine 47, cysteine 50, cysteine 72, and cysteine 75. The disordered stretch occupies residues 297–327 (ALGGADEQQGGGDGGEAVMTKDTGGGASSSA).

As to quaternary structure, interacts with RISBZ1/BZIP58.

It localises to the nucleus. Functionally, transcriptional activator that binds specifically to the DNA consensus core sequence 5'-AAAG-3' also known as prolamin box. Can activate the expression of genes encoding for the seed storage proteins glutelin, prolamin and globulin. Functions synergistically with RISBZ/BZIP58 to positively regulate quantitatively many seed storage proteins. Functions synergistically with RISBZ1/BZIP58 to positively regulate some metabolic enzymes, such as alanine aminotransferase and pyruvate phosphate dikinase, that are expressed in developing seeds. Functions synergistically with RISBZ1/BZIP58 to positively regulate genes that are key players in the development of aleurone layers. Functions synergistically with RISBZ1/BZIP58 to positively regulate the glutelin GLUD-1 gene in endosperm of developing seeds. Can activate the expression of the bifunctional lysine-degrading enzyme, lysine ketoglutarate reductase/saccharopine dehydrogenase (LKR/SDH), one of the key regulators determining free lysine content in plants. In germinating seeds, involved in the gibberellin-mediated activation of the alpha-amylase AMY1.1/AMY1A gene. The chain is Dof zinc finger protein 3 from Oryza sativa subsp. japonica (Rice).